A 1459-amino-acid chain; its full sequence is DNA-binding protein RFX7 (1459 aa).

The segment at 1 to 27 (MAEEQQQPPPQQLDAPQQLPLSAPNPG) is disordered. Over residues 12–21 (QLDAPQQLPL) the composition is skewed to low complexity. The RFX-type winged-helix DNA-binding region spans 108–183 (AFSWIRNTLE…YCYSGLRKKA (76 aa)). The PxLPxI/L motif; mediates interaction with ANKRA2 and RFXANK signature appears at 188–193 (PTLPNL). 6 disordered regions span residues 303–347 (AKQQ…LPNG), 404–428 (SVKQTPKTPQNVPASPGGDRSARHR), 482–590 (PSNS…GVTE), 634–659 (FTSTSSPSNGDSVNKDPKICTKSPRK), 688–716 (GQKPGTVKKDQKVPHSGKTESSTAGAQIP), and 918–1016 (SVTP…VPPS). 2 stretches are compositionally biased toward polar residues: residues 404–416 (SVKQTPKTPQNVP) and 482–502 (PSNSNAPLKHSASVSSATGTT). A compositionally biased stretch (low complexity) spans 521–534 (SPGSRASSTGGTSA). Residues 537 to 549 (VKMEPEGSSDEHP) show a composition bias toward basic and acidic residues. Composition is skewed to polar residues over residues 562–578 (PLTTSSALWGQKSNTDG), 634–645 (FTSTSSPSNGDS), and 706–716 (TESSTAGAQIP). The segment covering 947–963 (TPTPTPTPTPTPTPTPT) has biased composition (pro residues). Residues 971 to 1009 (GSQSLSRESPCSRLAQTTPVDSALGSSRHTPIGTPHSNC) are compositionally biased toward polar residues.

The protein belongs to the RFX family. Interacts (via PxLPxI/L motif) with RFXANK (via ankyrin repeats). Interacts (via PxLPxI/L motif) with ANKRA2 (via ankyrin repeats). As to expression, expressed in spleen and lymph node and to a lower extend in brain (at protein level). Expressed in lymphoid organs and lymphoid cell subsets. Expressed throughout natural killer (NK) cell maturation.

The protein localises to the nucleus. Transcription factor. Acts as a transcriptional activator by binding to promoter regions of target genes, such as Rec8, Mxd4 and Ddit4. Plays a role in natural killer (NK) cell maintenance and immunity. May play a role in the process of ciliogenesis in the neural tube and neural tube closure. This is DNA-binding protein RFX7 from Mus musculus (Mouse).